Consider the following 459-residue polypeptide: Inositol-trisphosphate 3-kinase A (459 aa).

A disordered region spans residues 1–29 (MTLPGRPTGMARPRGAGPCSPGLERAPRR). An omega-N-methylarginine mark is found at R35, R55, and R62. The disordered stretch occupies residues 49–164 (AAAGEPRARG…TSEDVGQKSH (116 aa)). Residues 116–132 (RRLSTSSLSSTGSSSLL) show a composition bias toward low complexity. Phosphoserine is present on residues S135 and S195. Residues S195, K207, 247–249 (QDL), and D260 contribute to the ATP site. 2 residues coordinate substrate: K262 and R283. The tract at residues 285-293 (DMYKKMLAV) is calmodulin-binding. 310–317 (KPRYMQWR) provides a ligand contact to substrate. ATP-binding residues include K334 and D414. Residue K417 coordinates substrate.

The protein belongs to the inositol phosphokinase (IPK) family.

It is found in the cytoplasm. It localises to the cytoskeleton. The enzyme catalyses 1D-myo-inositol 1,4,5-trisphosphate + ATP = 1D-myo-inositol 1,3,4,5-tetrakisphosphate + ADP + H(+). Its activity is regulated as follows. Activated by calcium/calmodulin. Catalyzes the phosphorylation of 1D-myo-inositol 1,4,5-trisphosphate (InsP3) into 1D-myo-inositol 1,3,4,5-tetrakisphosphate and participates to the regulation of calcium homeostasis. The sequence is that of Inositol-trisphosphate 3-kinase A from Mus musculus (Mouse).